We begin with the raw amino-acid sequence, 515 residues long: 2,3-bisphosphoglycerate-independent phosphoglycerate mutase (515 aa).

The Mn(2+) site is built by aspartate 14 and serine 64. Serine 64 serves as the catalytic Phosphoserine intermediate. Substrate-binding positions include histidine 125, arginine 155–aspartate 156, arginine 187, arginine 193, arginine 263–arginine 266, and lysine 337. Residues aspartate 404, histidine 408, aspartate 445, histidine 446, and histidine 464 each coordinate Mn(2+).

Belongs to the BPG-independent phosphoglycerate mutase family. Monomer. Mn(2+) is required as a cofactor.

It catalyses the reaction (2R)-2-phosphoglycerate = (2R)-3-phosphoglycerate. It participates in carbohydrate degradation; glycolysis; pyruvate from D-glyceraldehyde 3-phosphate: step 3/5. Its function is as follows. Catalyzes the interconversion of 2-phosphoglycerate and 3-phosphoglycerate. The chain is 2,3-bisphosphoglycerate-independent phosphoglycerate mutase from Yersinia pseudotuberculosis serotype O:1b (strain IP 31758).